The following is a 203-amino-acid chain: WUSCHEL-related homeobox 3 (203 aa).

A DNA-binding region (homeobox; WUS-type) is located at residues 4–68 (TPSTRWCPTP…NHKARERQRL (65 aa)). Disordered stretches follow at residues 73-95 (CARHQQQPSPPSSTVPPAPTAAA), 109-135 (LHHHHHHHHPYAAAAAAQSHHLQQQQQ), and 180-203 (STSGGLKEDCCSSSKSSSCSTSTN). Pro residues predominate over residues 80–91 (PSPPSSTVPPAP). Residues 109 to 118 (LHHHHHHHHP) are compositionally biased toward basic residues. Low complexity-rich tracts occupy residues 119–135 (YAAAAAAQSHHLQQQQQ) and 190–203 (CSSSKSSSCSTSTN).

It belongs to the WUS homeobox family.

The protein resides in the nucleus. Transcription factor which may be involved in developmental processes. This chain is WUSCHEL-related homeobox 3 (WOX3), found in Oryza sativa subsp. indica (Rice).